The sequence spans 201 residues: FMN-dependent NADH:quinone oxidoreductase (201 aa).

An FMN-binding site is contributed by 92-95 (MWNL).

It belongs to the azoreductase type 1 family. Homodimer. Requires FMN as cofactor.

The enzyme catalyses 2 a quinone + NADH + H(+) = 2 a 1,4-benzosemiquinone + NAD(+). The catalysed reaction is N,N-dimethyl-1,4-phenylenediamine + anthranilate + 2 NAD(+) = 2-(4-dimethylaminophenyl)diazenylbenzoate + 2 NADH + 2 H(+). In terms of biological role, quinone reductase that provides resistance to thiol-specific stress caused by electrophilic quinones. Its function is as follows. Also exhibits azoreductase activity. Catalyzes the reductive cleavage of the azo bond in aromatic azo compounds to the corresponding amines. The sequence is that of FMN-dependent NADH:quinone oxidoreductase from Caldicellulosiruptor bescii (strain ATCC BAA-1888 / DSM 6725 / KCTC 15123 / Z-1320) (Anaerocellum thermophilum).